Here is a 449-residue protein sequence, read N- to C-terminus: MSHYDLILRNGNVVCPDGVRKADIAVSDGKIVLIAEEIPGDAKEVIDAAGKHVFPGITDGHVHFNDPGRTEWETISTGSSALAAGGGVAYFDMPLNCSPCTLDAVNFNNKLAVAQKDSLVDYGFWGGLTSANLDKLDELAECGVIGFKAFACHSGIDEFPRMDDYTALVGMEKLAKLGLPLMVHCENAEITKELTELSLANNRTGVRDYFAARPPITEIENVSRMITFAEETGCKLIIAHISTAKAVDLVAQARARGVDVYCETIGHYLYLTGDDVERLGTVAKCSPPIRDGENQLQMWGRLFNDNIAFVSSDHSPCDPKLKNGEFMRVWGGISACQTTLQGLLTHAYHDRKFPLVKIAQLTAQHVNEIFKIKGKGQINLGYDADFALVDLNHEFTLQAEDLFYKHKVSPYVGDRFRGSVSQTILRGTTIYKDGKIVSQPIGKHLRPHQ.

Zn(2+) is bound by residues His61, His63, Lys148, His184, His240, and Asp313. Lys148 is subject to N6-carboxylysine.

The protein belongs to the metallo-dependent hydrolases superfamily. Allantoinase family. As to quaternary structure, homotetramer. The cofactor is Zn(2+). In terms of processing, carboxylation allows a single lysine to coordinate two zinc ions.

The enzyme catalyses (S)-allantoin + H2O = allantoate + H(+). The protein operates within nitrogen metabolism; (S)-allantoin degradation; allantoate from (S)-allantoin: step 1/1. Its function is as follows. Catalyzes the conversion of allantoin (5-ureidohydantoin) to allantoic acid by hydrolytic cleavage of the five-member hydantoin ring. The polypeptide is Allantoinase (Desulfitobacterium hafniense (strain Y51)).